Consider the following 158-residue polypeptide: Urease accessory protein UreE (158 aa).

This sequence belongs to the UreE family.

Its subcellular location is the cytoplasm. Functionally, involved in urease metallocenter assembly. Binds nickel. Probably functions as a nickel donor during metallocenter assembly. In Klebsiella pneumoniae (strain 342), this protein is Urease accessory protein UreE.